The primary structure comprises 534 residues: GPI transamidase component GPI17 (534 aa).

Topologically, residues 1–8 are cytoplasmic; it reads MSNANLRK. Residues 9–29 form a helical membrane-spanning segment; it reads WVGFCFVAIYLFLGVPLWYKL. The Lumenal segment spans residues 30–472; it reads TTVYRASLPI…VQQNFFPQEH (443 aa). N-linked (GlcNAc...) asparagine glycosylation is found at Asn-100, Asn-170, Asn-228, Asn-247, and Asn-299. Residues 473–493 form a helical membrane-spanning segment; that stretch reads MIAVYLPLLGPISAVMFFGFY. Residues 494-534 are Cytoplasmic-facing; sequence NVMKEKNQKSKKNGTEREVAKEKLELKEAQKLHAIDGEDEL.

This sequence belongs to the PIGS family. Forms a complex with CDC91, GPI16, GPI8 and GAA1. Post-translationally, N-glycosylated.

The protein resides in the endoplasmic reticulum membrane. The protein operates within glycolipid biosynthesis; glycosylphosphatidylinositol-anchor biosynthesis. Component of the GPI transamidase complex. Involved in transfer of GPI to proteins. In Saccharomyces cerevisiae (strain ATCC 204508 / S288c) (Baker's yeast), this protein is GPI transamidase component GPI17 (GPI17).